The sequence spans 428 residues: Zinc-type alcohol dehydrogenase B (428 aa).

6 residues coordinate Zn(2+): Cys-116, His-137, Cys-167, Cys-170, Cys-173, and Cys-181. At Lys-393 the chain carries N6-benzoyllysine.

This sequence belongs to the zinc-containing alcohol dehydrogenase family. Class-III subfamily. As to quaternary structure, homodimer. It depends on Zn(2+) as a cofactor. In terms of processing, benzoylation at lys-393 by gcnE leads to the activation od adhB.

The catalysed reaction is a primary alcohol + NAD(+) = an aldehyde + NADH + H(+). It carries out the reaction a secondary alcohol + NAD(+) = a ketone + NADH + H(+). Its function is as follows. Zinc-type alcohol dehydrogenase involved in development, secondary metabolism, pathogenicity, and stress response. Specifically controls the formation of sclerotia and the biosynthesis of aflatoxin. Contribute to seed colonization of A flavus on host maize seed. This Aspergillus flavus (strain ATCC 200026 / FGSC A1120 / IAM 13836 / NRRL 3357 / JCM 12722 / SRRC 167) protein is Zinc-type alcohol dehydrogenase B.